The chain runs to 639 residues: MLTLYLFTATCCFVCALPRQAQVDTAICHHTWPMCSDVPHPTSSAHNTALSSSHAISIEHRLLHSPSPPRENIRHSMRCRRRAIASSASTPVSHTQPLAANHRRSRITYATTDPTNSPTASPAKSDKLEADADPALHRRPDSLLRHLFQPCHAQRGTSNRATSQRASLNAVHHKLCGAMISSSWSTTCTPAIMDLPSLSVELSAGHKKKETPTEGGWGGEEGEDDVLATIRNTLSAPTSPAAATTHRLSFPEGSSFCLTAVSEYSQRLTSTAALTPPPPAVAAPFSFSSTVSETGAFPQSTAGRTRVDDTAVVTAGDPRSPVTHVTLLQIFRLRSSLLTSRSGDTLRGGEHEAIPKVASLFWTLLKATQTVEITHKTPSADSHRNPQKYTDRPQRLLLTALAIWQRTYNNTRADHAPQVRLLGNILTYRRPQTATASAKAHTQQQPEEPKGQQIWAQTAGQAAPHGDEPHSDGELRRESHSAPPTSRTLPDTILAVKRRSVAQRSHVRLDAKPGLNDRDGFRRRLLLPLSGYFRANELRNQQFMGYGTENGLKNTCLTRPLGAAGGVRETIGERQDRDVADSATQRVFHTLYAALQTVRVWYTALGTAWRTSGSRTRDSLFDGPRRRDRQAGRLRRLEL.

An N-terminal signal peptide occupies residues 1-16 (MLTLYLFTATCCFVCA). Disordered regions lie at residues 80–128 (RRRA…SDKL) and 432–488 (QTAT…TSRT). Composition is skewed to polar residues over residues 108–122 (TYATTDPTNSPTASP) and 432–446 (QTATASAKAHTQQQP). Residues 465-480 (HGDEPHSDGELRRESH) are compositionally biased toward basic and acidic residues.

This is an uncharacterized protein from Human cytomegalovirus (strain Merlin) (HHV-5).